A 304-amino-acid polypeptide reads, in one-letter code: Lipid droplet-associated hydrolase (304 aa).

The Nucleophile role is filled by Ser-119. Active-site charge relay system residues include Asp-250 and His-279.

The protein belongs to the AB hydrolase superfamily. LDAH family.

The protein resides in the lipid droplet. It carries out the reaction a cholesterol ester + H2O = cholesterol + a fatty acid + H(+). In terms of biological role, probable serine lipid hydrolase associated with lipid droplets. Has low cholesterol esterase activity. Appears to lack triglyceride lipase activity. Involved in cholesterol and triglyceride homeostasis; stimulates cellular triglyceride accumulation and cellular cholesterol release. This is Lipid droplet-associated hydrolase from Dictyostelium discoideum (Social amoeba).